Consider the following 242-residue polypeptide: Biosynthetic peptidoglycan transglycosylase (242 aa).

A helical membrane pass occupies residues 12–31 (LLFWLMLASALLVLALRWLP).

Belongs to the glycosyltransferase 51 family.

It is found in the cell inner membrane. The catalysed reaction is [GlcNAc-(1-&gt;4)-Mur2Ac(oyl-L-Ala-gamma-D-Glu-L-Lys-D-Ala-D-Ala)](n)-di-trans,octa-cis-undecaprenyl diphosphate + beta-D-GlcNAc-(1-&gt;4)-Mur2Ac(oyl-L-Ala-gamma-D-Glu-L-Lys-D-Ala-D-Ala)-di-trans,octa-cis-undecaprenyl diphosphate = [GlcNAc-(1-&gt;4)-Mur2Ac(oyl-L-Ala-gamma-D-Glu-L-Lys-D-Ala-D-Ala)](n+1)-di-trans,octa-cis-undecaprenyl diphosphate + di-trans,octa-cis-undecaprenyl diphosphate + H(+). It functions in the pathway cell wall biogenesis; peptidoglycan biosynthesis. Functionally, peptidoglycan polymerase that catalyzes glycan chain elongation from lipid-linked precursors. The chain is Biosynthetic peptidoglycan transglycosylase from Ectopseudomonas mendocina (strain ymp) (Pseudomonas mendocina).